Here is a 122-residue protein sequence, read N- to C-terminus: Large ribosomal subunit protein uL14 (122 aa).

This sequence belongs to the universal ribosomal protein uL14 family. As to quaternary structure, part of the 50S ribosomal subunit. Forms a cluster with proteins L3 and L19. In the 70S ribosome, L14 and L19 interact and together make contacts with the 16S rRNA in bridges B5 and B8.

In terms of biological role, binds to 23S rRNA. Forms part of two intersubunit bridges in the 70S ribosome. The sequence is that of Large ribosomal subunit protein uL14 from Thermosipho melanesiensis (strain DSM 12029 / CIP 104789 / BI429).